The chain runs to 147 residues: Hemoglobin subunit gamma (147 aa).

A Globin domain is found at 3–147 (NFTAEDKAAI…VASALASRYH (145 aa)). Heme b contacts are provided by His-64 and His-93.

It belongs to the globin family. Heterotetramer of two alpha chains and two gamma chains in fetal hemoglobin (Hb F). As to expression, red blood cells.

Functionally, gamma chains make up the fetal hemoglobin F, in combination with alpha chains. The polypeptide is Hemoglobin subunit gamma (HBG) (Lagothrix lagotricha (Brown woolly monkey)).